Consider the following 571-residue polypeptide: Hemagglutinin-neuraminidase (571 aa).

Residues 1 to 25 (MEDYSNLSLKSIPKRTCRIIFRTAT) lie on the Intravirion side of the membrane. The chain crosses the membrane as a helical span at residues 26–46 (ILGICTLIVLCSSILHEIIHL). Over 47-571 (DVSSGLMDSD…IIPFLRELIP (525 aa)) the chain is Virion surface. 3 cysteine pairs are disulfide-bonded: C166/C190, C180/C241, and C232/C245. An involved in neuraminidase activity region spans residues 228-233 (NRKSCS). 3 N-linked (GlcNAc...) asparagine; by host glycosylation sites follow: N272, N284, and N335. 3 disulfides stabilise this stretch: C338–C459, C370–C380, and C453–C463. Residues N386, N454, N498, N501, N517, and N522 are each glycosylated (N-linked (GlcNAc...) asparagine; by host). C535 and C546 are joined by a disulfide.

Belongs to the paramyxoviruses hemagglutinin-neuraminidase family. In terms of assembly, homotetramer; composed of disulfide-linked homodimers. Interacts with F protein trimer.

Its subcellular location is the virion membrane. It is found in the host cell membrane. The catalysed reaction is Hydrolysis of alpha-(2-&gt;3)-, alpha-(2-&gt;6)-, alpha-(2-&gt;8)- glycosidic linkages of terminal sialic acid residues in oligosaccharides, glycoproteins, glycolipids, colominic acid and synthetic substrates.. Functionally, attaches the virus to sialic acid-containing cell receptors and thereby initiating infection. Binding of HN protein to the receptor induces a conformational change that allows the F protein to trigger virion/cell membranes fusion. Neuraminidase activity ensures the efficient spread of the virus by dissociating the mature virions from the neuraminic acid containing glycoproteins. The protein is Hemagglutinin-neuraminidase (HN) of Homo sapiens (Human).